Consider the following 165-residue polypeptide: Probable DNA polymerase III subunit chi (165 aa).

Belongs to the DNA polymerase III chi/HolC chain family. In terms of assembly, DNA polymerase III contains a core (composed of alpha, epsilon and theta chains) that associates with a tau subunit. This core dimerizes to form the POLIII' complex. PolIII' associates with the gamma complex (composed of gamma, delta, delta', psi and chi chains) and with the beta chain to form the complete DNA polymerase III complex. Interacts directly with the psi subunit (holD). The only subunit of the DNA polymerase III holoenzyme known to interact with single-stranded DNA binding protein (SSB).

The catalysed reaction is DNA(n) + a 2'-deoxyribonucleoside 5'-triphosphate = DNA(n+1) + diphosphate. Part of the beta sliding clamp loading complex, which hydrolyzes ATP to load the beta clamp onto primed DNA to form the DNA replication pre-initiation complex. DNA polymerase III is a complex, multichain enzyme responsible for most of the replicative synthesis in bacteria. This DNA polymerase also exhibits 3' to 5' exonuclease activity. This Rickettsia prowazekii (strain Madrid E) protein is Probable DNA polymerase III subunit chi.